The sequence spans 200 residues: ATP synthase subunit s, mitochondrial (200 aa).

The transit peptide at 1 to 25 directs the protein to the mitochondrion; it reads MMLFGKISQQLCGLKKLPWSRDSRY. Residues 1 to 61 are N-terminal domain; sequence MMLFGKISQQ…SEWLLRCGAM (61 aa). Glycine 59 is a Mg(2+) binding site. 4 LRR repeats span residues 62–87, 88–116, 117–141, and 142–173; these read VRYH…KYKI, QAID…KIRL, CKCH…KSML, and EMEI…LSDL. Residue threonine 93 coordinates Mg(2+).

This sequence belongs to the ATP synthase subunit s family. In terms of assembly, homotetramer. Associates with ATP synthase.

It is found in the mitochondrion. Its subcellular location is the mitochondrion inner membrane. Its function is as follows. Involved in regulation of mitochondrial membrane ATP synthase. Necessary for H(+) conduction of ATP synthase. Facilitates energy-driven catalysis of ATP synthesis by blocking a proton leak through an alternative proton exit pathway. The chain is ATP synthase subunit s, mitochondrial (DMAC2L) from Bos taurus (Bovine).